A 1178-amino-acid chain; its full sequence is Pyruvate carboxylase, mitochondrial (1178 aa).

The N-terminal 20 residues, 1–20 (MLKFQTVRGGLRLLGVRRSS), are a transit peptide targeting the mitochondrion. Phosphoserine is present on serine 21. N6-acetyllysine is present on residues lysine 35 and lysine 39. Positions 36-486 (PIKKVMVANR…DTQFIDENPE (451 aa)) constitute a Biotin carboxylation domain. The residue at position 79 (lysine 79) is an N6-acetyllysine; alternate. Lysine 79 is subject to N6-succinyllysine; alternate. N6-acetyllysine is present on residues lysine 148 and lysine 152. Positions 152 and 236 each coordinate ATP. An ATP-grasp domain is found at 156–353 (RAIAIAAGVP…LVHAQIHVSE (198 aa)). Lysine 241 is modified (N6-acetyllysine). Histidine 271 serves as a coordination point for ATP. An N6-acetyllysine mark is found at lysine 297, lysine 316, and lysine 319. Arginine 328 is a catalytic residue. An N6-acetyllysine modification is found at lysine 434. Lysine 442 carries the post-translational modification N6-succinyllysine. The Pyruvate carboxyltransferase domain occupies 563–832 (LLLMDTTFRD…DTEVPLERVF (270 aa)). Substrate is bound at residue 571–575 (RDAHQ). Position 572 (aspartate 572) interacts with Mn(2+). Lysine 589 carries the post-translational modification N6-acetyllysine. Arginine 644 contributes to the substrate binding site. N6-acetyllysine is present on residues lysine 661 and lysine 717. Residue lysine 741 coordinates Mn(2+). Lysine 741 is subject to N6-carboxylysine. Lysine 748 is modified (N6-acetyllysine). Mn(2+) is bound by residues histidine 771 and histidine 773. Lysine 892 is subject to N6-acetyllysine. Residue threonine 908 coordinates substrate. N6-acetyllysine is present on lysine 969. Lysine 988 bears the N6-acetyllysine; alternate mark. Lysine 988 is modified (N6-succinyllysine; alternate). Lysine 992 is subject to N6-acetyllysine. Threonine 1003 carries the post-translational modification Phosphothreonine. N6-acetyllysine is present on residues lysine 1061, lysine 1090, and lysine 1124. The region spanning 1109-1178 (KGQIGAPMPG…EGDDLILEIE (70 aa)) is the Biotinyl-binding domain. Lysine 1144 carries the N6-biotinyllysine modification.

In terms of assembly, homotetramer. Interacts (via the biotin carboxylation domain) with SIRT4. It depends on biotin as a cofactor. Mn(2+) serves as cofactor. Acetylation of Lys-316 is observed in liver mitochondria from fasted mice but not from fed mice. Acetylation of Lys-748 might play a role in catalytic activity regulation. Liver, kidney, adipose tissue, liver and brain.

It localises to the mitochondrion matrix. The catalysed reaction is hydrogencarbonate + pyruvate + ATP = oxaloacetate + ADP + phosphate + H(+). It participates in carbohydrate biosynthesis; gluconeogenesis. In terms of biological role, pyruvate carboxylase catalyzes a 2-step reaction, involving the ATP-dependent carboxylation of the covalently attached biotin in the first step and the transfer of the carboxyl group to pyruvate in the second. Catalyzes in a tissue specific manner, the initial reactions of glucose (liver, kidney) and lipid (adipose tissue, liver, brain) synthesis from pyruvate. This Mus musculus (Mouse) protein is Pyruvate carboxylase, mitochondrial (Pc).